The primary structure comprises 425 residues: Serine--tRNA ligase (425 aa).

228–230 (TAE) is an L-serine binding site. An ATP-binding site is contributed by 259–261 (RSE). An L-serine-binding site is contributed by Glu282. ATP is bound at residue 346-349 (EIAS). Ser382 is an L-serine binding site.

This sequence belongs to the class-II aminoacyl-tRNA synthetase family. Type-1 seryl-tRNA synthetase subfamily. As to quaternary structure, homodimer. The tRNA molecule binds across the dimer.

It localises to the cytoplasm. The catalysed reaction is tRNA(Ser) + L-serine + ATP = L-seryl-tRNA(Ser) + AMP + diphosphate + H(+). The enzyme catalyses tRNA(Sec) + L-serine + ATP = L-seryl-tRNA(Sec) + AMP + diphosphate + H(+). The protein operates within aminoacyl-tRNA biosynthesis; selenocysteinyl-tRNA(Sec) biosynthesis; L-seryl-tRNA(Sec) from L-serine and tRNA(Sec): step 1/1. In terms of biological role, catalyzes the attachment of serine to tRNA(Ser). Is also able to aminoacylate tRNA(Sec) with serine, to form the misacylated tRNA L-seryl-tRNA(Sec), which will be further converted into selenocysteinyl-tRNA(Sec). This Rickettsia massiliae (strain Mtu5) protein is Serine--tRNA ligase.